A 308-amino-acid polypeptide reads, in one-letter code: Ribosomal RNA small subunit methyltransferase H (308 aa).

S-adenosyl-L-methionine-binding positions include 33 to 35 (GGH), Asp-52, Tyr-81, Asp-99, and Gln-106.

The protein belongs to the methyltransferase superfamily. RsmH family.

Its subcellular location is the cytoplasm. The enzyme catalyses cytidine(1402) in 16S rRNA + S-adenosyl-L-methionine = N(4)-methylcytidine(1402) in 16S rRNA + S-adenosyl-L-homocysteine + H(+). Specifically methylates the N4 position of cytidine in position 1402 (C1402) of 16S rRNA. The protein is Ribosomal RNA small subunit methyltransferase H of Francisella philomiragia subsp. philomiragia (strain ATCC 25017 / CCUG 19701 / FSC 153 / O#319-036).